The sequence spans 190 residues: Putative triphosphatase YjbK (190 aa).

The region spanning 4–189 (EIEIEFKNML…LRFYEEKRKS (186 aa)) is the CYTH domain.

In Bacillus subtilis (strain 168), this protein is Putative triphosphatase YjbK (yjbK).